The sequence spans 223 residues: Large ribosomal subunit protein uL4c (223 aa).

Residues 61–96 (TKTRSEVEGGGKKPWKQKGTGNARAGSSNSPLWKGG) are disordered.

Belongs to the universal ribosomal protein uL4 family. As to quaternary structure, part of the 50S ribosomal subunit.

It is found in the plastid. The protein localises to the chloroplast. Functionally, probably binds the 23S rRNA. The polypeptide is Large ribosomal subunit protein uL4c (rpl4) (Guillardia theta (Cryptophyte)).